Reading from the N-terminus, the 1056-residue chain is Carbamoyl phosphate synthase large chain (1056 aa).

The interval 1–397 (MPRRTDIKKV…GFKKALRSID (397 aa)) is carboxyphosphate synthetic domain. Positions 127, 167, 173, 174, 206, 208, 213, 239, 240, 241, 282, and 294 each coordinate ATP. The ATP-grasp 1 domain maps to 131 to 323 (KALMQKIGEP…IARVAAKIAI (193 aa)). Residues glutamine 282, glutamate 294, and asparagine 296 each coordinate Mg(2+). Residues glutamine 282, glutamate 294, and asparagine 296 each contribute to the Mn(2+) site. Residues 398–530 (TDINTHTNHN…YSTHGVTTDI (133 aa)) are oligomerization domain. The carbamoyl phosphate synthetic domain stretch occupies residues 531-919 (IQNDKKKVLI…YKACISADNE (389 aa)). Residues 661–852 (SELLDALKIP…LAKVAAKVMI (192 aa)) form the ATP-grasp 2 domain. 10 residues coordinate ATP: arginine 697, serine 736, leucine 738, glutamate 743, glycine 768, valine 769, histidine 770, serine 771, glutamine 811, and glutamate 823. Mg(2+) is bound by residues glutamine 811, glutamate 823, and asparagine 825. Mn(2+) contacts are provided by glutamine 811, glutamate 823, and asparagine 825. The MGS-like domain occupies 918-1056 (NELPIEGNVF…PISHYLSEVE (139 aa)). Residues 920-1056 (LPIEGNVFIS…PISHYLSEVE (137 aa)) are allosteric domain.

It belongs to the CarB family. Composed of two chains; the small (or glutamine) chain promotes the hydrolysis of glutamine to ammonia, which is used by the large (or ammonia) chain to synthesize carbamoyl phosphate. Tetramer of heterodimers (alpha,beta)4. Requires Mg(2+) as cofactor. Mn(2+) is required as a cofactor.

It catalyses the reaction hydrogencarbonate + L-glutamine + 2 ATP + H2O = carbamoyl phosphate + L-glutamate + 2 ADP + phosphate + 2 H(+). The catalysed reaction is hydrogencarbonate + NH4(+) + 2 ATP = carbamoyl phosphate + 2 ADP + phosphate + 2 H(+). It participates in amino-acid biosynthesis; L-arginine biosynthesis; carbamoyl phosphate from bicarbonate: step 1/1. The protein operates within pyrimidine metabolism; UMP biosynthesis via de novo pathway; (S)-dihydroorotate from bicarbonate: step 1/3. Functionally, large subunit of the glutamine-dependent carbamoyl phosphate synthetase (CPSase). CPSase catalyzes the formation of carbamoyl phosphate from the ammonia moiety of glutamine, carbonate, and phosphate donated by ATP, constituting the first step of 2 biosynthetic pathways, one leading to arginine and/or urea and the other to pyrimidine nucleotides. The large subunit (synthetase) binds the substrates ammonia (free or transferred from glutamine from the small subunit), hydrogencarbonate and ATP and carries out an ATP-coupled ligase reaction, activating hydrogencarbonate by forming carboxy phosphate which reacts with ammonia to form carbamoyl phosphate. This Methanosphaerula palustris (strain ATCC BAA-1556 / DSM 19958 / E1-9c) protein is Carbamoyl phosphate synthase large chain.